The primary structure comprises 931 residues: Protocadherin gamma-B2 (931 aa).

An N-terminal signal peptide occupies residues 1–30; it reads MKASSGRCGLVRWLQVLLPFLLSLFPGALP. Cadherin domains are found at residues 31–133, 134–242, 243–347, 348–452, 453–562, and 570–675; these read VQIR…TPLF, KQTK…PPVF, SQDV…APEV, IVTS…APVF, QQTS…APRV, and DGSA…LPDL. Over 31–691 the chain is Extracellular; the sequence is VQIRYSIPEE…SDPQAELQFY (661 aa). N-linked (GlcNAc...) asparagine glycans are attached at residues Asn419 and Asn545. The chain crosses the membrane as a helical span at residues 692 to 712; that stretch reads LVVALALISVLFFLAVILAIS. Residues 713–931 are Cytoplasmic-facing; the sequence is LRLRRSSRSD…KKKSGKKEKK (219 aa). Disordered stretches follow at residues 814–840 and 901–931; these read DWRF…WPNN and ATLT…KEKK. A compositionally biased stretch (polar residues) spans 815 to 840; the sequence is WRFSQAQRPGTSGSQNGDDTGTWPNN. Over residues 921-931 the composition is skewed to basic residues; the sequence is NKKKSGKKEKK.

It localises to the cell membrane. Its function is as follows. Potential calcium-dependent cell-adhesion protein. May be involved in the establishment and maintenance of specific neuronal connections in the brain. The polypeptide is Protocadherin gamma-B2 (PCDHGB2) (Pan troglodytes (Chimpanzee)).